The primary structure comprises 521 residues: Glutamate--tRNA ligase (521 aa).

A 'HIGH' region motif is present at residues 30-40 (PSPTGYLHVGG). The 'KMSKS' region motif lies at 277-281 (KLSKR). Lysine 280 provides a ligand contact to ATP.

The protein belongs to the class-I aminoacyl-tRNA synthetase family. Glutamate--tRNA ligase type 1 subfamily. In terms of assembly, monomer.

It localises to the cytoplasm. It catalyses the reaction tRNA(Glu) + L-glutamate + ATP = L-glutamyl-tRNA(Glu) + AMP + diphosphate. In terms of biological role, catalyzes the attachment of glutamate to tRNA(Glu) in a two-step reaction: glutamate is first activated by ATP to form Glu-AMP and then transferred to the acceptor end of tRNA(Glu). This is Glutamate--tRNA ligase from Chlorobium phaeovibrioides (strain DSM 265 / 1930) (Prosthecochloris vibrioformis (strain DSM 265)).